A 235-amino-acid chain; its full sequence is MRSPRTLEVWKLGTVNYLKSLKLQEKLVSERKAHQIPDTLLSLQHPPTYTLGKRRTDHNLLIPESELTKIGAELHYTQRGGDITFHGPHQAILYPIISLRSIGFGARNYVETLERSMIEFASIYGVKARAGNKCETGVWVGDRKIGAIGVRISSGITSHGLALNIDPDMKYFEHIVPCGIADKEVTSLRRETDTLLPSEEVIHEQLVSCLAKAFSYDDVVWKEDPSLILDTQDKE.

A mitochondrion-targeting transit peptide spans Met-1–Lys-32. The BPL/LPL catalytic domain maps to His-34–Asp-218. Substrate-binding positions include Arg-79–His-86, Ala-147–Gly-149, and Gly-160–Ala-162. Cys-178 (acyl-thioester intermediate) is an active-site residue.

This sequence belongs to the LipB family. In terms of tissue distribution, expressed in leaves. Expressed in roots, rosette leaves, cauline leaves, stems and siliques.

It is found in the mitochondrion. The enzyme catalyses octanoyl-[ACP] + L-lysyl-[protein] = N(6)-octanoyl-L-lysyl-[protein] + holo-[ACP] + H(+). It functions in the pathway protein modification; protein lipoylation via endogenous pathway; protein N(6)-(lipoyl)lysine from octanoyl-[acyl-carrier-protein]: step 1/2. Functionally, catalyzes the transfer of endogenously produced octanoic acid from octanoyl-acyl-carrier-protein onto the lipoyl domains of lipoate-dependent enzymes. Lipoyl-ACP can also act as a substrate although octanoyl-ACP is likely to be the physiological substrate. Together with LIP1 is essential for mitochondrial protein lipoylation during seed development. Required for the lipoylation of mitochondrial 2-oxoglutarate dehydrogenase component E2 proteins in leaves and roots. The sequence is that of Octanoyltransferase LIP2, mitochondrial from Arabidopsis thaliana (Mouse-ear cress).